Consider the following 359-residue polypeptide: Phospho-N-acetylmuramoyl-pentapeptide-transferase (359 aa).

10 helical membrane passes run glutamine 3 to isoleucine 23, valine 55 to phenylalanine 75, glycine 84 to isoleucine 104, threonine 117 to phenylalanine 137, isoleucine 156 to serine 176, leucine 187 to phenylalanine 207, leucine 231 to alanine 251, isoleucine 255 to threonine 275, leucine 280 to isoleucine 300, and phenylalanine 334 to leucine 354.

It belongs to the glycosyltransferase 4 family. MraY subfamily. It depends on Mg(2+) as a cofactor.

The protein resides in the cell membrane. The catalysed reaction is UDP-N-acetyl-alpha-D-muramoyl-L-alanyl-gamma-D-glutamyl-meso-2,6-diaminopimeloyl-D-alanyl-D-alanine + di-trans,octa-cis-undecaprenyl phosphate = di-trans,octa-cis-undecaprenyl diphospho-N-acetyl-alpha-D-muramoyl-L-alanyl-D-glutamyl-meso-2,6-diaminopimeloyl-D-alanyl-D-alanine + UMP. It functions in the pathway cell wall biogenesis; peptidoglycan biosynthesis. Catalyzes the initial step of the lipid cycle reactions in the biosynthesis of the cell wall peptidoglycan: transfers peptidoglycan precursor phospho-MurNAc-pentapeptide from UDP-MurNAc-pentapeptide onto the lipid carrier undecaprenyl phosphate, yielding undecaprenyl-pyrophosphoryl-MurNAc-pentapeptide, known as lipid I. The sequence is that of Phospho-N-acetylmuramoyl-pentapeptide-transferase from Mycobacteroides abscessus (strain ATCC 19977 / DSM 44196 / CCUG 20993 / CIP 104536 / JCM 13569 / NCTC 13031 / TMC 1543 / L948) (Mycobacterium abscessus).